Here is a 393-residue protein sequence, read N- to C-terminus: Methylthioribose kinase (393 aa).

Residues N38, K53, and 107–109 (EDL) each bind ATP. D225 provides a ligand contact to substrate. 242-244 (DPE) contributes to the ATP binding site. Residue R332 coordinates substrate.

It belongs to the methylthioribose kinase family. Homodimer.

The catalysed reaction is 5-(methylsulfanyl)-D-ribose + ATP = 5-(methylsulfanyl)-alpha-D-ribose 1-phosphate + ADP + H(+). Its pathway is amino-acid biosynthesis; L-methionine biosynthesis via salvage pathway; S-methyl-5-thio-alpha-D-ribose 1-phosphate from S-methyl-5'-thioadenosine (hydrolase route): step 2/2. Catalyzes the phosphorylation of methylthioribose into methylthioribose-1-phosphate. This chain is Methylthioribose kinase, found in Bacillus cereus (strain ZK / E33L).